The primary structure comprises 46 residues: Daisho2 (46 aa).

The N-terminal stretch at 1-22 is a signal peptide; that stretch reads MNCLKICGFFFALIAALATAEA.

In terms of tissue distribution, hemolymph (at protein level).

It localises to the secreted. Its function is as follows. Peptide which plays a role in the humoral immune response to a subset of filamentous fungi, including F.oxysporum and F.verticillioides. This is Daisho2 from Drosophila melanogaster (Fruit fly).